The chain runs to 619 residues: Polyadenylate-binding protein 1-like (619 aa).

4 consecutive RRM domains span residues 11–89 (ASLY…WSQR), 99–175 (GNIF…HFKS), 191–268 (TNIY…RAQK), and 294–370 (VNLY…LAQR). The tract at residues 431–458 (PAPRWTSQPPRPSSAYPPGASMVRPPVV) is disordered. Residues 533–610 (QEPLTASMLA…AVAVLQAHQA (78 aa)) form the PABC domain.

It belongs to the polyadenylate-binding protein type-1 family. In terms of tissue distribution, expressed in ovary and testis. Also expressed in pancreas, liver and thymus, and at lower levels in other somatic tissues including brain and lung.

The protein resides in the cytoplasm. In terms of biological role, poly(A)-binding protein involved in oocyte maturation and early embryo development. It is required for cytosolic mRNA polyadenylation and translational activation of maternally stored mRNA in oocytes. The sequence is that of Polyadenylate-binding protein 1-like from Homo sapiens (Human).